We begin with the raw amino-acid sequence, 231 residues long: Ribose-5-phosphate isomerase A (231 aa).

Residues 40-43 (TGST), 93-96 (DGAD), and 106-109 (KGGG) contribute to the substrate site. Glu-115 (proton acceptor) is an active-site residue. Position 133 (Lys-133) interacts with substrate.

It belongs to the ribose 5-phosphate isomerase family. In terms of assembly, homodimer.

The catalysed reaction is aldehydo-D-ribose 5-phosphate = D-ribulose 5-phosphate. It participates in carbohydrate degradation; pentose phosphate pathway; D-ribose 5-phosphate from D-ribulose 5-phosphate (non-oxidative stage): step 1/1. In terms of biological role, catalyzes the reversible conversion of ribose-5-phosphate to ribulose 5-phosphate. In Escherichia coli O1:K1 / APEC, this protein is Ribose-5-phosphate isomerase A.